We begin with the raw amino-acid sequence, 335 residues long: Holliday junction branch migration complex subunit RuvB (335 aa).

The interval 1–181 (MDRIVEIEKY…FGMQFRLEFY (181 aa)) is large ATPase domain (RuvB-L). ATP-binding positions include Leu20, Arg21, Gly62, Lys65, Thr66, Thr67, 128-130 (EDY), Arg171, Tyr181, and Arg218. Thr66 provides a ligand contact to Mg(2+). Residues 182-252 (KDSELALILQ…RANEALNSLG (71 aa)) form a small ATPAse domain (RuvB-S) region. A head domain (RuvB-H) region spans residues 255-335 (ELGFDAMDLR…LNYEKTLFEE (81 aa)). DNA contacts are provided by Arg309 and Arg314.

This sequence belongs to the RuvB family. In terms of assembly, homohexamer. Forms an RuvA(8)-RuvB(12)-Holliday junction (HJ) complex. HJ DNA is sandwiched between 2 RuvA tetramers; dsDNA enters through RuvA and exits via RuvB. An RuvB hexamer assembles on each DNA strand where it exits the tetramer. Each RuvB hexamer is contacted by two RuvA subunits (via domain III) on 2 adjacent RuvB subunits; this complex drives branch migration. In the full resolvosome a probable DNA-RuvA(4)-RuvB(12)-RuvC(2) complex forms which resolves the HJ.

It localises to the cytoplasm. The catalysed reaction is ATP + H2O = ADP + phosphate + H(+). The RuvA-RuvB-RuvC complex processes Holliday junction (HJ) DNA during genetic recombination and DNA repair, while the RuvA-RuvB complex plays an important role in the rescue of blocked DNA replication forks via replication fork reversal (RFR). RuvA specifically binds to HJ cruciform DNA, conferring on it an open structure. The RuvB hexamer acts as an ATP-dependent pump, pulling dsDNA into and through the RuvAB complex. RuvB forms 2 homohexamers on either side of HJ DNA bound by 1 or 2 RuvA tetramers; 4 subunits per hexamer contact DNA at a time. Coordinated motions by a converter formed by DNA-disengaged RuvB subunits stimulates ATP hydrolysis and nucleotide exchange. Immobilization of the converter enables RuvB to convert the ATP-contained energy into a lever motion, pulling 2 nucleotides of DNA out of the RuvA tetramer per ATP hydrolyzed, thus driving DNA branch migration. The RuvB motors rotate together with the DNA substrate, which together with the progressing nucleotide cycle form the mechanistic basis for DNA recombination by continuous HJ branch migration. Branch migration allows RuvC to scan DNA until it finds its consensus sequence, where it cleaves and resolves cruciform DNA. In Campylobacter jejuni (strain RM1221), this protein is Holliday junction branch migration complex subunit RuvB.